The following is a 488-amino-acid chain: Tripartite motif-containing protein 6 (488 aa).

Residues 15–60 form an RING-type zinc finger; the sequence is CPICLELLTEPLSIDCGHSFCQVCIIGNSNNSVFGQGGRSSCPVCR. The B box-type zinc-finger motif lies at 92–133; it reads LEVIFCALHGEKLQLFCKEDGKLICWLCERSQEHRGHHTFLM. Residues cysteine 97, histidine 100, cysteine 119, and histidine 125 each coordinate Zn(2+). Positions 132-223 form a coiled coil; sequence LMEEVAQEYQ…SIIEKAEGDL (92 aa). Residues 282–488 form the B30.2/SPRY domain; sequence DLRKMLKVFR…VPMTLRRPTS (207 aa).

This sequence belongs to the TRIM/RBCC family. As to quaternary structure, homotrimer. Forms heteromultimers (via B30.2/SPRY domain) with TRIM5. Interacts with MYC. Interacts (via SPRY domain) with IKBKE. Interacts with VAMP8; this interaction contributes to the activation of the type I interferon antiviral response. Interacts with DHX16.

The protein localises to the cytoplasm. The enzyme catalyses S-ubiquitinyl-[E2 ubiquitin-conjugating enzyme]-L-cysteine + [acceptor protein]-L-lysine = [E2 ubiquitin-conjugating enzyme]-L-cysteine + N(6)-ubiquitinyl-[acceptor protein]-L-lysine.. It functions in the pathway protein modification; protein ubiquitination. In terms of biological role, E3 ubiquitin ligase that plays a crucial role in the activation of the IKBKE-dependent branch of the type I interferon signaling pathway. In concert with the ubiquitin-conjugating E2 enzyme UBE2K, synthesizes unanchored 'Lys-48'-linked polyubiquitin chains that promote the oligomerization and autophosphorylation of IKBKE leading to stimulation of an antiviral response. Also ubiquitinates MYC and inhibits its transcription activation activity, maintaining the pluripotency of embryonic stem cells. Promotes the association of unanchored 'Lys-48'-polyubiquitin chains with DHX16 leading to enhancement of RIGI-mediated innate antiviral immune response. The protein is Tripartite motif-containing protein 6 (Trim6) of Mus musculus (Mouse).